A 321-amino-acid polypeptide reads, in one-letter code: 1D-myo-inositol 2-acetamido-2-deoxy-alpha-D-glucopyranoside deacetylase (321 aa).

Residues H15, D18, and H150 each contribute to the Zn(2+) site. Residues 280–321 (PEGERESDLFAGLPPATDGTGAAGAPSATGAANPADAEGGAA) form a disordered region. Positions 290–321 (AGLPPATDGTGAAGAPSATGAANPADAEGGAA) are enriched in low complexity.

This sequence belongs to the MshB deacetylase family. Zn(2+) is required as a cofactor.

It carries out the reaction 1D-myo-inositol 2-acetamido-2-deoxy-alpha-D-glucopyranoside + H2O = 1D-myo-inositol 2-amino-2-deoxy-alpha-D-glucopyranoside + acetate. Functionally, catalyzes the deacetylation of 1D-myo-inositol 2-acetamido-2-deoxy-alpha-D-glucopyranoside (GlcNAc-Ins) in the mycothiol biosynthesis pathway. This chain is 1D-myo-inositol 2-acetamido-2-deoxy-alpha-D-glucopyranoside deacetylase, found in Streptomyces griseus subsp. griseus (strain JCM 4626 / CBS 651.72 / NBRC 13350 / KCC S-0626 / ISP 5235).